The following is a 393-amino-acid chain: Glutamyl-tRNA reductase (393 aa).

Substrate-binding positions include 47-50 (TCGR), serine 98, 103-105 (ETD), and glutamine 109. Cysteine 48 acts as the Nucleophile in catalysis. Residue 177 to 182 (GAGAVG) coordinates NADP(+).

It belongs to the glutamyl-tRNA reductase family. As to quaternary structure, homodimer.

The catalysed reaction is (S)-4-amino-5-oxopentanoate + tRNA(Glu) + NADP(+) = L-glutamyl-tRNA(Glu) + NADPH + H(+). Its pathway is porphyrin-containing compound metabolism; protoporphyrin-IX biosynthesis; 5-aminolevulinate from L-glutamyl-tRNA(Glu): step 1/2. Its function is as follows. Catalyzes the NADPH-dependent reduction of glutamyl-tRNA(Glu) to glutamate 1-semialdehyde (GSA). The protein is Glutamyl-tRNA reductase of Pyrobaculum islandicum (strain DSM 4184 / JCM 9189 / GEO3).